Consider the following 272-residue polypeptide: Bifunctional protein FolD 2 (272 aa).

Residues 157–159 (GRS), threonine 182, and isoleucine 223 each bind NADP(+).

This sequence belongs to the tetrahydrofolate dehydrogenase/cyclohydrolase family. Homodimer.

It carries out the reaction (6R)-5,10-methylene-5,6,7,8-tetrahydrofolate + NADP(+) = (6R)-5,10-methenyltetrahydrofolate + NADPH. It catalyses the reaction (6R)-5,10-methenyltetrahydrofolate + H2O = (6R)-10-formyltetrahydrofolate + H(+). It participates in one-carbon metabolism; tetrahydrofolate interconversion. Catalyzes the oxidation of 5,10-methylenetetrahydrofolate to 5,10-methenyltetrahydrofolate and then the hydrolysis of 5,10-methenyltetrahydrofolate to 10-formyltetrahydrofolate. The polypeptide is Bifunctional protein FolD 2 (Syntrophomonas wolfei subsp. wolfei (strain DSM 2245B / Goettingen)).